We begin with the raw amino-acid sequence, 144 residues long: Large ribosomal subunit protein uL15 (144 aa).

A disordered region spans residues 1–52 (MRLNSLSPAEGAKHSAKRLGRGIGSGLGKTGGRGHKGQKSRTGGGVRRGFEG). Residues 21 to 31 (RGIGSGLGKTG) are compositionally biased toward gly residues.

This sequence belongs to the universal ribosomal protein uL15 family. As to quaternary structure, part of the 50S ribosomal subunit.

Binds to the 23S rRNA. This Actinobacillus pleuropneumoniae serotype 5b (strain L20) protein is Large ribosomal subunit protein uL15.